The sequence spans 112 residues: Signal recognition particle 19 kDa protein (112 aa).

Belongs to the SRP19 family. Part of the signal recognition particle protein translocation system, which is composed of SRP and FtsY. Archaeal SRP consists of a 7S RNA molecule of 300 nucleotides and two protein subunits: SRP54 and SRP19.

It is found in the cytoplasm. In terms of biological role, involved in targeting and insertion of nascent membrane proteins into the cytoplasmic membrane. Binds directly to 7S RNA and mediates binding of the 54 kDa subunit of the SRP. The chain is Signal recognition particle 19 kDa protein from Aeropyrum pernix (strain ATCC 700893 / DSM 11879 / JCM 9820 / NBRC 100138 / K1).